We begin with the raw amino-acid sequence, 703 residues long: Metastasis-associated protein MTA1 (703 aa).

Residues 1 to 164 (MAANMYRVGD…PQQKTLLADK (164 aa)) form the BAH domain. The ELM2 domain maps to 165–276 (GEIRVGNRYQ…KAISALVPQG (112 aa)). Lysine 182 is covalently cross-linked (Glycyl lysine isopeptide (Lys-Gly) (interchain with G-Cter in ubiquitin)). The region spanning 283 to 335 (DEMEEWSASEANLFEEALEKYGKDFTDIQQDFLPWKSLTSIIEYYYMWKTTDR) is the SANT domain. Serine 386 is subject to Phosphoserine. Residues 393–420 (CESCYTTQSYQWYSWGPPNMQCRLCASC) form a GATA-type; atypical zinc finger. The tract at residues 437–460 (DGERPGPNRNNMSPHGIPARSSGS) is disordered. Serine 449 carries the phosphoserine modification. Residue lysine 509 forms a Glycyl lysine isopeptide (Lys-Gly) (interchain with G-Cter in SUMO2 and SUMO3) linkage. At serine 522 the chain carries Phosphoserine. Residues 542–552 (ETHPRPPKPDP) show a composition bias toward basic and acidic residues. The segment at 542-583 (ETHPRPPKPDPVKSSSSVLSSLTPAKSAPVINNGSPTILGKR) is disordered. Residues 545–552 (PRPPKPDP) carry the SH3-binding motif. Lysine 549 participates in a covalent cross-link: Glycyl lysine isopeptide (Lys-Gly) (interchain with G-Cter in SUMO2). The span at 553-565 (VKSSSSVLSSLTP) shows a compositional bias: low complexity. The residue at position 564 (threonine 564) is a Phosphothreonine. Residue serine 576 is modified to Phosphoserine. Position 578 is a phosphothreonine (threonine 578). The residue at position 614 (lysine 614) is an N6-acetyllysine; alternate. Lysine 614 participates in a covalent cross-link: Glycyl lysine isopeptide (Lys-Gly) (interchain with G-Cter in ubiquitin); alternate. The residue at position 627 (serine 627) is a Phosphoserine. Residues 644-674 (DVFYMATEETRKIRKLLSSSETKRAARRPYK) are interaction with RBBP4. The disordered stretch occupies residues 661-703 (SSSETKRAARRPYKPIALRQSQALPLRPPPPAPVNDEPIVIED). Positions 684–693 (LPLRPPPPAP) match the SH3-binding motif. The SUMO interaction motif 1 (SIM); crucial for efficient sumoylation motif lies at 699–703 (IVIED).

It belongs to the metastasis-associated protein family. Component of the nucleosome remodeling and deacetylase (NuRD) repressor complex, composed of core proteins MTA1, MTA2, MTA3, RBBP4, RBBP7, HDAC1, HDAC2, MBD2, MBD3, and peripherally associated proteins CDK2AP1, CDK2AP2, GATAD2A, GATAD2B, CHD3, CHD4 and CHD5. The exact stoichiometry of the NuRD complex is unknown, and some subunits such as MBD2 and MBD3, GATAD2A and GATAD2B, and CHD3, CHD4 and CHD5 define mutually exclusive NuRD complexes. Interacts with RBBP4; the interaction is direct. Interacts with BMAL1. Interacts with CLOCK. Interacts with COP1. Interacts with CSNK1G2 in the cytoplasm. Interacts with EP300. Interacts with HDAC2. Interacts with ITGB3BP/CENPR. Interacts with MBD3L2. Interacts with MDM2. Interacts with NACC2. Interacts with p53/TP53. Interacts with PIAS1. Interacts with PIAS3. Interacts with PIAS4. Interacts with PWWP2A. Interacts with PWWP2B. Interacts with SENP1. Interacts with SENP2. Interacts with SIX3; facilitates the binding of SIX3 to the core DNA motif of SIX3 promoter. Interacts with SUMO1. Interacts with SUMO2. Interacts with TFCP2L1; which is indispensable for TFCP2L1-mediated self-renewal-promoting effect and endoderm-inhibiting action. Interacts with TFAP2C. Interacts with TPR. Interacts with UBE2I/UBC9. Post-translationally, phosphorylation by CSNK1G2/CK1 triggered by estrogen enhances corepression of estrogen receptor (ER). Acetylation is essential for its transcriptional coactivator activity. In terms of processing, sumoylation positively regulates its transcriptional corepressor activity but does not affect the protein stability. Sumoylated preferentially by SUMO2 or SUMO3 than SUMO1. Sumoylation is enhanced by PIAS1/3/4 and preferentially sumoylated by SUMO2 in the presence of PIAS1/3/4. Desumoylated by SENP1. Post-translationally, ubiquitinated by COP1, which leads to proteasomal degradation. Isoform 1 abundant in testis and expressed at low levels in brain, heart, lung, liver, and kidney. Isoform 2 abundant in adrenal gland, brain, colon, heart, liver, lung, muscle, prostate, stomach, testis, and thymus and expressed at low levels in duodenum, kidney, pancreas, parotid, and spleen.

The protein resides in the nucleus. Its subcellular location is the nucleus envelope. It localises to the cytoplasm. The protein localises to the cytoskeleton. It is found in the rough endoplasmic reticulum. The protein resides in the golgi apparatus. Its subcellular location is the zymogen granule. In terms of biological role, transcriptional coregulator which can act as both a transcriptional corepressor and coactivator. Acts as a component of the histone deacetylase NuRD complex which participates in the remodeling of chromatin. In the NuRD complex, regulates transcription of its targets by modifying the acetylation status of the target chromatin and cofactor accessibility to the target DNA. In conjunction with other components of NuRD, acts as a transcriptional corepressor of BRCA1, ESR1, TFF1 and CDKN1A. Acts as a transcriptional coactivator of BCAS3, and SUMO2, independent of the NuRD complex. Stimulates the expression of WNT1 by inhibiting the expression of its transcriptional corepressor SIX3. Regulates p53-dependent and -independent DNA repair processes following genotoxic stress. Regulates the stability and function of p53/TP53 by inhibiting its ubiquitination by COP1 and MDM2 thereby regulating the p53-dependent DNA repair. Plays a role in the regulation of the circadian clock and is essential for the generation and maintenance of circadian rhythms under constant light and for normal entrainment of behavior to light-dark (LD) cycles. Positively regulates the CLOCK-BMAL1 heterodimer mediated transcriptional activation of its own transcription and the transcription of CRY1. Regulates deacetylation of BMAL1 by regulating SIRT1 expression, resulting in derepressing CRY1-mediated transcription repression. With TFCP2L1, promotes establishment and maintenance of pluripotency in embryonic stem cells (ESCs) and inhibits endoderm differentiation. This chain is Metastasis-associated protein MTA1 (Mta1), found in Rattus norvegicus (Rat).